A 109-amino-acid polypeptide reads, in one-letter code: Tetracenomycin F2 cyclase (109 aa).

As to quaternary structure, homodimer.

It carries out the reaction tetracenomycin F2 + H(+) = tetracenomycin F1 + H2O. The protein operates within antibiotic biosynthesis; tetracenomycin C biosynthesis. Functionally, catalyzing the conversion of tetracenomycin F2 to tetracenomycin F1. In Streptomyces glaucescens, this protein is Tetracenomycin F2 cyclase (tcmI).